The primary structure comprises 140 residues: Ribonuclease P protein component (140 aa).

The segment at 115-140 (RCKPGAPKPPPFKKRPNKSVKSNKQT) is disordered.

The protein belongs to the RnpA family. As to quaternary structure, consists of a catalytic RNA component (M1 or rnpB) and a protein subunit.

It catalyses the reaction Endonucleolytic cleavage of RNA, removing 5'-extranucleotides from tRNA precursor.. In terms of biological role, RNaseP catalyzes the removal of the 5'-leader sequence from pre-tRNA to produce the mature 5'-terminus. It can also cleave other RNA substrates such as 4.5S RNA. The protein component plays an auxiliary but essential role in vivo by binding to the 5'-leader sequence and broadening the substrate specificity of the ribozyme. The chain is Ribonuclease P protein component from Pseudoalteromonas translucida (strain TAC 125).